Reading from the N-terminus, the 98-residue chain is Protein translation factor SUI1 homolog (98 aa).

This sequence belongs to the SUI1 family.

This Pyrococcus abyssi (strain GE5 / Orsay) protein is Protein translation factor SUI1 homolog.